We begin with the raw amino-acid sequence, 2587 residues long: Protein KINKY POLLEN (2587 aa).

Residues 1 to 27 form the signal peptide; the sequence is MAAFLVMFIFTIALFVALLWVFFKSLP. Residue Asn-71 is glycosylated (N-linked (GlcNAc...) asparagine). Positions 103 to 124 are disordered; it reads PSHSSKGPRKPKTRKSSSGGKG. A compositionally biased stretch (basic residues) spans 108-117; that stretch reads KGPRKPKTRK. N-linked (GlcNAc...) asparagine glycans are attached at residues Asn-262, Asn-281, and Asn-485. The segment at 270-290 is disordered; sequence SKGEVIDSSSGNTTSEKPPKQ. Residues 276–285 show a composition bias toward polar residues; that stretch reads DSSSGNTTSE. Residues 589–611 are disordered; sequence GSSSKNKQEKGAHRSKPPSGRGT. A coiled-coil region spans residues 691–716; it reads TLNKEIQSTQVELETAKAIYQEFLEE. A disordered region spans residues 784–814; that stretch reads QHGNRNPEEASTVTGDKQKEEPTTTPNSLDK. N-linked (GlcNAc...) asparagine glycosylation is found at Asn-1155, Asn-1250, Asn-1281, and Asn-1486. Disordered stretches follow at residues 1571 to 1608, 1646 to 1673, and 1729 to 1797; these read HCSKPAQMSRTSSLSGSTDRVTSDNGTSTSDGTEKHPD, VDARSTKEKQSEPEENSHSDPSDDDGYN, and EGNQ…PEEE. Residues 1576–1590 are compositionally biased toward polar residues; that stretch reads AQMSRTSSLSGSTDR. The N-linked (GlcNAc...) asparagine glycan is linked to Asn-1595. A compositionally biased stretch (basic and acidic residues) spans 1646 to 1666; that stretch reads VDARSTKEKQSEPEENSHSDP. The segment covering 1746–1760 has biased composition (polar residues); it reads KQPSTGSGNLASQSK. 5 N-linked (GlcNAc...) asparagine glycosylation sites follow: Asn-1861, Asn-1951, Asn-1981, Asn-2036, and Asn-2278. The stretch at 2006–2036 forms a coiled coil; it reads IEEVELAKIELEAKERDRMMLLDDIRKLTQN. Positions 2274 to 2287 are enriched in polar residues; it reads QGSKNQSLKSSTIR. Disordered stretches follow at residues 2274-2299, 2319-2360, and 2442-2469; these read QGSKNQSLKSSTIRGSGRELRRTSSF, SMEH…KKSR, and KDDIGLRDKDESGRTDQESGAWVKRPGD. Composition is skewed to basic and acidic residues over residues 2289–2299, 2322–2336, 2343–2359, and 2442–2458; these read SGRELRRTSSF, HQGESSKGKLKDSKT, SVHEEKKGEKSLEDKKS, and KDDIGLRDKDESGRTDQ. Residues Asn-2513 and Asn-2544 are each glycosylated (N-linked (GlcNAc...) asparagine). The interval 2533 to 2587 is disordered; the sequence is IRRHSKKFQNQNTTKGSKKTQLSPTLSPPKEEDQYESDSSSGSSAYEEFLDQNQI. Residues 2540-2557 show a composition bias toward polar residues; that stretch reads FQNQNTTKGSKKTQLSPT. The segment covering 2569–2579 has biased composition (low complexity); that stretch reads SDSSSGSSAYE.

The protein belongs to the SABRE family. In terms of tissue distribution, mostly expressed in pollen and roots, especially in tip-growing cells, but also present in seedlings, stems, leaves, buds, flowers, siliques and seeds.

It is found in the secreted. The protein localises to the golgi apparatus. In terms of biological role, may be involved in membrane trafficking. Required for tip growth in pollen tubes and root hairs. The protein is Protein KINKY POLLEN of Arabidopsis thaliana (Mouse-ear cress).